We begin with the raw amino-acid sequence, 71 residues long: uncharacterized protein (71 aa).

A helical transmembrane segment spans residues 24-44; that stretch reads FGGGGLSTAIYSIFAFFSIPL.

The protein resides in the membrane. This is an uncharacterized protein from Schizosaccharomyces pombe (strain 972 / ATCC 24843) (Fission yeast).